A 151-amino-acid polypeptide reads, in one-letter code: Ribonuclease H (151 aa).

Positions 1–141 (MQEVTVYSDG…ADALANKGVE (141 aa)) constitute an RNase H type-1 domain. Residues D9, E47, D69, and D133 each contribute to the Mg(2+) site.

The protein belongs to the RNase H family. As to quaternary structure, monomer. It depends on Mg(2+) as a cofactor.

It localises to the cytoplasm. It carries out the reaction Endonucleolytic cleavage to 5'-phosphomonoester.. Functionally, endonuclease that specifically degrades the RNA of RNA-DNA hybrids. This is Ribonuclease H from Ralstonia nicotianae (strain ATCC BAA-1114 / GMI1000) (Ralstonia solanacearum).